The primary structure comprises 251 residues: uncharacterized protein (251 aa).

12-36 (VVTGASSGIGEATARTLAAQGFHVV) serves as a coordination point for NADP(+). Ser-136 contributes to the substrate binding site. The active-site Proton acceptor is the Tyr-149.

The protein belongs to the short-chain dehydrogenases/reductases (SDR) family.

This is an uncharacterized protein from Mycobacterium tuberculosis (strain CDC 1551 / Oshkosh).